Reading from the N-terminus, the 288-residue chain is Shikimate dehydrogenase (NADP(+)) (288 aa).

Shikimate is bound by residues 21-23 (SLS) and threonine 68. Residue lysine 72 is the Proton acceptor of the active site. The shikimate site is built by asparagine 93 and aspartate 108. NADP(+) contacts are provided by residues 132-136 (GNGGA) and leucine 230. Tyrosine 232 contacts shikimate. Glycine 253 provides a ligand contact to NADP(+).

Belongs to the shikimate dehydrogenase family. As to quaternary structure, homodimer.

It catalyses the reaction shikimate + NADP(+) = 3-dehydroshikimate + NADPH + H(+). It functions in the pathway metabolic intermediate biosynthesis; chorismate biosynthesis; chorismate from D-erythrose 4-phosphate and phosphoenolpyruvate: step 4/7. Its function is as follows. Involved in the biosynthesis of the chorismate, which leads to the biosynthesis of aromatic amino acids. Catalyzes the reversible NADPH linked reduction of 3-dehydroshikimate (DHSA) to yield shikimate (SA). The polypeptide is Shikimate dehydrogenase (NADP(+)) (Crocosphaera subtropica (strain ATCC 51142 / BH68) (Cyanothece sp. (strain ATCC 51142))).